A 417-amino-acid chain; its full sequence is Peptidyl-Asp metalloendopeptidase (417 aa).

A signal peptide spans 1 to 23; it reads MKSKSMCTTVGLIAMCLAGSAAA. His-331 contributes to the Zn(2+) binding site. The active site involves Glu-332. His-335 and His-341 together coordinate Zn(2+).

Belongs to the peptidase M72 family. Zn(2+) is required as a cofactor.

It catalyses the reaction Cleavage of Xaa-|-Asp, Xaa-|-Glu and Xaa-|-cysteic acid bonds.. In terms of biological role, metalloprotease, specifically cleaves on the N-terminal side of aspartyl, glutamyl and cysteic acid residues. The protein is Peptidyl-Asp metalloendopeptidase of Xanthomonas campestris pv. campestris (strain ATCC 33913 / DSM 3586 / NCPPB 528 / LMG 568 / P 25).